The chain runs to 119 residues: UPF0145 protein Bcep18194_B0595 (119 aa).

This sequence belongs to the UPF0145 family.

This chain is UPF0145 protein Bcep18194_B0595, found in Burkholderia lata (strain ATCC 17760 / DSM 23089 / LMG 22485 / NCIMB 9086 / R18194 / 383).